The sequence spans 267 residues: Nus factor SuhB (267 aa).

Residues Glu67, Asp84, and Leu86 each coordinate Mg(2+). Glu67 is a substrate binding site. Substrate is bound by residues Leu86–Thr89, Arg183, and Asp212.

Belongs to the inositol monophosphatase superfamily. Homodimer. The rRNA transcription and antitermination complex (rrnTAC) consists of RNA polymerase (RNAP), NusA, NusB, NusE (rpsJ), NusG, SubB, ribosomal protein S4, DNA and precursor rRNA; S4 is more flexible than other subunits. Requires Mg(2+) as cofactor.

The protein localises to the cytoplasm. The catalysed reaction is a myo-inositol phosphate + H2O = myo-inositol + phosphate. In terms of biological role, part of the processive rRNA transcription and antitermination complex (rrnTAC). The complex forms an RNA-chaperone ring around the RNA exit tunnel of RNA polymerase (RNAP). It supports rapid transcription and antitermination of rRNA operons, cotranscriptional rRNA folding, and annealing of distal rRNA regions to allow correct ribosome biogenesis. This subunit may play a central role in organizing the structure. This Haemophilus influenzae (strain ATCC 51907 / DSM 11121 / KW20 / Rd) protein is Nus factor SuhB (suhB).